Reading from the N-terminus, the 87-residue chain is Small ribosomal subunit protein bS20 (87 aa).

A disordered region spans residues 1–28; the sequence is MANIKSQQKRNRTNERARLRNKSVKSSL.

Belongs to the bacterial ribosomal protein bS20 family.

Functionally, binds directly to 16S ribosomal RNA. The polypeptide is Small ribosomal subunit protein bS20 (Mycobacterium marinum (strain ATCC BAA-535 / M)).